The sequence spans 101 residues: MAKQSMKARDVKRVKLAEKFYAQRVELKRIISDVNSSDEERWDAVLKLQTLPRDSSPSRQRNRCSQTGRPHGVLRKFGLSRIKVREAAMRGEIPGLKKASW.

The interval 51 to 70 is disordered; the sequence is LPRDSSPSRQRNRCSQTGRP. The segment covering 52–68 has biased composition (polar residues); that stretch reads PRDSSPSRQRNRCSQTG.

It belongs to the universal ribosomal protein uS14 family. In terms of assembly, part of the 30S ribosomal subunit. Contacts proteins S3 and S10.

In terms of biological role, binds 16S rRNA, required for the assembly of 30S particles and may also be responsible for determining the conformation of the 16S rRNA at the A site. The sequence is that of Small ribosomal subunit protein uS14 from Mannheimia succiniciproducens (strain KCTC 0769BP / MBEL55E).